Reading from the N-terminus, the 312-residue chain is Olfactory receptor 6B2 (312 aa).

At 1–25 (MSGENVTKVSTFILVGLPTAPGLQY) the chain is on the extracellular side. An N-linked (GlcNAc...) asparagine glycan is attached at Asn5. A helical membrane pass occupies residues 26–46 (LLFLLFLLTYLFVLVENLAII). Residues 47–54 (LIVWSSTS) lie on the Cytoplasmic side of the membrane. Residues 55–75 (LHRPMYYFLSSMSFLEIWYVS) form a helical membrane-spanning segment. The Extracellular portion of the chain corresponds to 76–99 (DITPKMLEGFLLQQKRISFVGCMT). Cys97 and Cys189 are joined by a disulfide. Residues 100–120 (QLYFFSSLVCTECVLLASMAY) traverse the membrane as a helical segment. Residues 121-139 (DRYVAICHPLRYHVLVTPG) lie on the Cytoplasmic side of the membrane. Residues 140–160 (LCLQLVGFSFVSGFTISMIKV) traverse the membrane as a helical segment. The Extracellular segment spans residues 161–196 (CFISSVTFCGSNVLNHFFCDISPILKLACTDFSTAE). Residues 197–217 (LVDFILAFIILVFPLLATILS) traverse the membrane as a helical segment. Residues 218–237 (YWHITLAVLRIPSATGCWRA) are Cytoplasmic-facing. Residues 238 to 258 (FSTCASHLTVVTVFYTALLFM) traverse the membrane as a helical segment. The Extracellular portion of the chain corresponds to 259–271 (YVRPQAIDSQSSN). Residues 272 to 292 (KLISAVYTVVTPIINPLIYCL) form a helical membrane-spanning segment. Residues 293–312 (RNKEFKDALKKALGLGQTSH) lie on the Cytoplasmic side of the membrane.

The protein belongs to the G-protein coupled receptor 1 family.

The protein localises to the cell membrane. Functionally, odorant receptor. The polypeptide is Olfactory receptor 6B2 (OR6B2) (Homo sapiens (Human)).